A 250-amino-acid chain; its full sequence is Ribosomal RNA small subunit methyltransferase J (250 aa).

S-adenosyl-L-methionine-binding positions include 96 to 97 and Asp168; that span reads RD.

This sequence belongs to the methyltransferase superfamily. RsmJ family.

It is found in the cytoplasm. The catalysed reaction is guanosine(1516) in 16S rRNA + S-adenosyl-L-methionine = N(2)-methylguanosine(1516) in 16S rRNA + S-adenosyl-L-homocysteine + H(+). Its function is as follows. Specifically methylates the guanosine in position 1516 of 16S rRNA. This chain is Ribosomal RNA small subunit methyltransferase J, found in Neisseria meningitidis serogroup B (strain ATCC BAA-335 / MC58).